We begin with the raw amino-acid sequence, 321 residues long: D-alanine--D-alanine ligase (321 aa).

Residues 121–315 (RIWFLTNNIN…FTNLIEEIIK (195 aa)) form the ATP-grasp domain. 147–199 (PMKRPYVIKPLTQGSSIGVEVIFAEDDFNFADYDFPYGDQVIIEQYIKGRELQ) is an ATP binding site. Residues Glu268, Glu282, and Asn284 each contribute to the Mg(2+) site.

This sequence belongs to the D-alanine--D-alanine ligase family. It depends on Mg(2+) as a cofactor. The cofactor is Mn(2+).

It is found in the cytoplasm. The catalysed reaction is 2 D-alanine + ATP = D-alanyl-D-alanine + ADP + phosphate + H(+). The protein operates within cell wall biogenesis; peptidoglycan biosynthesis. Cell wall formation. This chain is D-alanine--D-alanine ligase, found in Rickettsia africae (strain ESF-5).